The primary structure comprises 572 residues: MSRLEIALSSTLDHLLKHIFLGTVFLTSLYALYRWLLPKPLPGIPFNQKSAQSIWGDVVELRDDPSGLAKWCSKQLENHGSPICQALMGPLSKPVVLVADVGNAREMLMGRSDFDRSAYIIDRFPLFGEFHLNMKTGDNWRQSRNWLKDLLAPQYLHNVAGPAIHSSVLKLIKLWEHKSCVGDSRAFNMVSDLKTLALDVIVAFHFGSDFQDSALDRQVDHVGKLDGSKLPCGEHNEVEFSKAPLHEFQQALTDVGDKMAAIYTTKWPPLIVAWWVRYVSPYYRPFFQAKDRFIRKHINLAVRRYRNDEEPSTGIDYMVYREEKAARKAYRQPMFDKQIMIDEAYGNLIAGQHTTSAALVWILKLLADYPSVQEKLREELQGIFVGAMQENRLPTAAEIITSKLPYLDAVLEETLRLRAAMLVPRDATKDTELLGRRIPKGTVVLLVCQGPDYKPSPPSKYWSDVKASRVYPGKGNPDLEVFDPERWLVRNEKGDLEFDGSSYPQLAFGLGIRSCWGRRLAMVEMRIMTTLMTLKFELKDVPEGLRGHEASYDISYRAKKGFLRLKSLGEVP.

Cys-515 contacts heme.

Belongs to the cytochrome P450 family. It depends on heme as a cofactor.

The protein operates within secondary metabolite biosynthesis. Functionally, cytochrome P450 monooxygenase; part of the gene cluster that mediates the biosynthesis of the 6-methyl-2-pyrone derivative xylariolide D. XilC hydroxylates the 5-alkyl-6-methyl-2-pyrone backbone called prexylariolide D, produced by the highly reducing polyketide synthase xilA, on its side chain to form xylariolide D. This chain is Cytochrome P450 monooxygenase xilC, found in Penicillium crustosum (Blue mold fungus).